The sequence spans 400 residues: Telomere repeat-binding protein 6 (400 aa).

The 80-residue stretch at 173–252 (VKFGIKSLNI…DDENLGSLGF (80 aa)) folds into the Ubiquitin-like domain. The 60-residue stretch at 310–369 (VQRRIRRPFTVSEVEALVQAVERLGTGRWRDVKSHAFNHVNHRTYVDLKDKWKTLVHTAK) folds into the HTH myb-type domain. Positions 338–365 (WRDVKSHAFNHVNHRTYVDLKDKWKTLV) form a DNA-binding region, H-T-H motif.

Homodimer. As to expression, expressed ubiquitously.

It localises to the nucleus. Its function is as follows. Binds specifically to the plant telomeric double-stranded DNA sequences. At least 4 repeats of telomeric sequences are required for binding. This chain is Telomere repeat-binding protein 6 (TRP6), found in Arabidopsis thaliana (Mouse-ear cress).